Here is a 502-residue protein sequence, read N- to C-terminus: Lysine--tRNA ligase (502 aa).

The disordered stretch occupies residues 1–22 (MSDHEQAQAQSQDENQIMAERR). Mg(2+) is bound by residues Glu-413 and Glu-420.

The protein belongs to the class-II aminoacyl-tRNA synthetase family. In terms of assembly, homodimer. It depends on Mg(2+) as a cofactor.

The protein localises to the cytoplasm. It catalyses the reaction tRNA(Lys) + L-lysine + ATP = L-lysyl-tRNA(Lys) + AMP + diphosphate. The polypeptide is Lysine--tRNA ligase (Chromobacterium violaceum (strain ATCC 12472 / DSM 30191 / JCM 1249 / CCUG 213 / NBRC 12614 / NCIMB 9131 / NCTC 9757 / MK)).